A 79-amino-acid polypeptide reads, in one-letter code: RNA-binding protein Hfq (79 aa).

The 61-residue stretch at 10–70 (DVFLKTVRKQ…ISTIMPGQPI (61 aa)) folds into the Sm domain.

It belongs to the Hfq family. As to quaternary structure, homohexamer.

In terms of biological role, RNA chaperone that binds small regulatory RNA (sRNAs) and mRNAs to facilitate mRNA translational regulation in response to envelope stress, environmental stress and changes in metabolite concentrations. Also binds with high specificity to tRNAs. The chain is RNA-binding protein Hfq from Bartonella bacilliformis (strain ATCC 35685 / KC583 / Herrer 020/F12,63).